Here is a 315-residue protein sequence, read N- to C-terminus: Methionyl-tRNA formyltransferase (315 aa).

The tract at residues 2-189 is N-terminal domain; that stretch reads SDSLRIIFAG…LITTLKQLAD (188 aa). 113–116 provides a ligand contact to (6S)-5,6,7,8-tetrahydrofolate; sequence SLLP. The C-terminal domain stretch occupies residues 210–315; the sequence is KEEARIDWSL…EWFIPGNRLA (106 aa).

Belongs to the Fmt family.

It carries out the reaction L-methionyl-tRNA(fMet) + (6R)-10-formyltetrahydrofolate = N-formyl-L-methionyl-tRNA(fMet) + (6S)-5,6,7,8-tetrahydrofolate + H(+). Functionally, attaches a formyl group to the free amino group of methionyl-tRNA(fMet). The formyl group appears to play a dual role in the initiator identity of N-formylmethionyl-tRNA by promoting its recognition by IF2 and preventing the misappropriation of this tRNA by the elongation apparatus. In Salmonella typhi, this protein is Methionyl-tRNA formyltransferase.